The chain runs to 467 residues: Nodulation protein T (467 aa).

The first 17 residues, methionine 1–glycine 17, serve as a signal peptide directing secretion. Cysteine 18 carries the N-palmitoyl cysteine lipid modification. Cysteine 18 carries the S-diacylglycerol cysteine lipid modification.

This sequence belongs to the outer membrane factor (OMF) (TC 1.B.17) family.

It localises to the cell membrane. The polypeptide is Nodulation protein T (nodT) (Rhizobium leguminosarum bv. trifolii).